The following is a 1033-amino-acid chain: Isoleucine--tRNA ligase (1033 aa).

Positions 47 to 57 (PTANGLPHVGH) match the 'HIGH' region motif. Positions 590–594 (KMSKS) match the 'KMSKS' region motif. Residue Lys593 participates in ATP binding.

It belongs to the class-I aminoacyl-tRNA synthetase family. IleS type 2 subfamily. Monomer. Zn(2+) is required as a cofactor.

It localises to the cytoplasm. The enzyme catalyses tRNA(Ile) + L-isoleucine + ATP = L-isoleucyl-tRNA(Ile) + AMP + diphosphate. Its function is as follows. Catalyzes the attachment of isoleucine to tRNA(Ile). As IleRS can inadvertently accommodate and process structurally similar amino acids such as valine, to avoid such errors it has two additional distinct tRNA(Ile)-dependent editing activities. One activity is designated as 'pretransfer' editing and involves the hydrolysis of activated Val-AMP. The other activity is designated 'posttransfer' editing and involves deacylation of mischarged Val-tRNA(Ile). This Bacillus thuringiensis (strain Al Hakam) protein is Isoleucine--tRNA ligase.